Consider the following 292-residue polypeptide: Bifunctional protein FolD (292 aa).

NADP(+) is bound by residues 169–171 (GRG), T196, and V237.

The protein belongs to the tetrahydrofolate dehydrogenase/cyclohydrolase family. Homodimer.

It catalyses the reaction (6R)-5,10-methylene-5,6,7,8-tetrahydrofolate + NADP(+) = (6R)-5,10-methenyltetrahydrofolate + NADPH. The enzyme catalyses (6R)-5,10-methenyltetrahydrofolate + H2O = (6R)-10-formyltetrahydrofolate + H(+). It functions in the pathway one-carbon metabolism; tetrahydrofolate interconversion. In terms of biological role, catalyzes the oxidation of 5,10-methylenetetrahydrofolate to 5,10-methenyltetrahydrofolate and then the hydrolysis of 5,10-methenyltetrahydrofolate to 10-formyltetrahydrofolate. The polypeptide is Bifunctional protein FolD (Bifidobacterium longum (strain NCC 2705)).